The primary structure comprises 148 residues: IQ domain-containing protein F5 (148 aa).

IQ domains are found at residues 11-40 and 67-96; these read ERSA…RAWI and QEWA…AVRI.

In Homo sapiens (Human), this protein is IQ domain-containing protein F5 (IQCF5).